The chain runs to 294 residues: Shikimate kinase (294 aa).

An ATP-binding site is contributed by 87–97 (PLAGGLKSSSA).

It belongs to the GHMP kinase family. Archaeal shikimate kinase subfamily.

It is found in the cytoplasm. It catalyses the reaction shikimate + ATP = 3-phosphoshikimate + ADP + H(+). The protein operates within metabolic intermediate biosynthesis; chorismate biosynthesis; chorismate from D-erythrose 4-phosphate and phosphoenolpyruvate: step 5/7. The sequence is that of Shikimate kinase (aroK) from Methanosarcina acetivorans (strain ATCC 35395 / DSM 2834 / JCM 12185 / C2A).